The following is a 317-amino-acid chain: L-lactate dehydrogenase (317 aa).

NAD(+) contacts are provided by residues V17, D38, K43, Y69, and 83-84 (GA). The substrate site is built by Q86 and R92. NAD(+) is bound by residues S105, 122–124 (ATN), and S147. A substrate-binding site is contributed by 124-127 (NPVD). 152–155 (DSAR) provides a ligand contact to substrate. 2 residues coordinate beta-D-fructose 1,6-bisphosphate: R157 and H172. The Proton acceptor role is filled by H179. Phosphotyrosine is present on Y224. T233 is a binding site for substrate.

The protein belongs to the LDH/MDH superfamily. LDH family. In terms of assembly, homotetramer.

It is found in the cytoplasm. It catalyses the reaction (S)-lactate + NAD(+) = pyruvate + NADH + H(+). The protein operates within fermentation; pyruvate fermentation to lactate; (S)-lactate from pyruvate: step 1/1. Its activity is regulated as follows. Allosterically activated by fructose 1,6-bisphosphate (FBP). In terms of biological role, catalyzes the conversion of lactate to pyruvate. This Bacillus velezensis (strain DSM 23117 / BGSC 10A6 / LMG 26770 / FZB42) (Bacillus amyloliquefaciens subsp. plantarum) protein is L-lactate dehydrogenase.